The chain runs to 294 residues: 33 kDa chaperonin (294 aa).

2 disulfide bridges follow: Cys239–Cys241 and Cys272–Cys275.

It belongs to the HSP33 family. Post-translationally, under oxidizing conditions two disulfide bonds are formed involving the reactive cysteines. Under reducing conditions zinc is bound to the reactive cysteines and the protein is inactive.

It is found in the cytoplasm. Redox regulated molecular chaperone. Protects both thermally unfolding and oxidatively damaged proteins from irreversible aggregation. Plays an important role in the bacterial defense system toward oxidative stress. In Listeria monocytogenes serotype 4b (strain CLIP80459), this protein is 33 kDa chaperonin.